The following is a 206-amino-acid chain: Somatotropin (206 aa).

The signal sequence occupies residues 1–22 (MAGLHFFPALLALLMASLQTHQ). Cystine bridges form between Cys75–Cys179 and Cys196–Cys204.

Belongs to the somatotropin/prolactin family.

It localises to the secreted. In terms of biological role, growth hormone plays an important role in growth control and is involved in the regulation of several anabolic processes. Implicated as an osmoregulatory substance important for seawater adaptation. The chain is Somatotropin (gh) from Protopterus annectens (African lungfish).